A 402-amino-acid chain; its full sequence is CCA-adding enzyme (402 aa).

ATP-binding residues include G32 and R35. CTP is bound by residues G32 and R35. Residues D45 and D47 each coordinate Mg(2+). The ATP site is built by R116, D159, R162, R165, and R168. 5 residues coordinate CTP: R116, D159, R162, R165, and R168.

This sequence belongs to the tRNA nucleotidyltransferase/poly(A) polymerase family. Bacterial CCA-adding enzyme type 3 subfamily. In terms of assembly, homodimer. Mg(2+) serves as cofactor.

The enzyme catalyses a tRNA precursor + 2 CTP + ATP = a tRNA with a 3' CCA end + 3 diphosphate. It catalyses the reaction a tRNA with a 3' CCA end + 2 CTP + ATP = a tRNA with a 3' CCACCA end + 3 diphosphate. Catalyzes the addition and repair of the essential 3'-terminal CCA sequence in tRNAs without using a nucleic acid template. Adds these three nucleotides in the order of C, C, and A to the tRNA nucleotide-73, using CTP and ATP as substrates and producing inorganic pyrophosphate. tRNA 3'-terminal CCA addition is required both for tRNA processing and repair. Also involved in tRNA surveillance by mediating tandem CCA addition to generate a CCACCA at the 3' terminus of unstable tRNAs. While stable tRNAs receive only 3'-terminal CCA, unstable tRNAs are marked with CCACCA and rapidly degraded. This is CCA-adding enzyme from Streptococcus thermophilus (strain CNRZ 1066).